Reading from the N-terminus, the 2813-residue chain is A-kinase anchor protein 13 (2813 aa).

Disordered regions lie at residues Ala-304–Cys-400 and Leu-415–Leu-439. Over residues Thr-427–Leu-439 the composition is skewed to polar residues. The segment at Trp-494–Ala-516 is important for interaction with PRKAR2A. Disordered stretches follow at residues Ala-539–Asn-585, His-632–Cys-653, and Ser-690–Gln-726. Residues Ser-561–Ser-577 show a composition bias toward basic and acidic residues. Positions Ser-690–Asp-702 are enriched in polar residues. The residue at position 790 (Ser-790) is a Phosphoserine. Disordered stretches follow at residues Val-805 to Leu-856 and Glu-939 to Glu-965. At Thr-815 the chain carries Phosphothreonine. Basic and acidic residues predominate over residues Pro-835 to Ala-844. Composition is skewed to polar residues over residues Leu-847–Leu-856 and Glu-939–Gln-948. The residue at position 953 (Thr-953) is a Phosphothreonine. Ser-983 bears the Phosphoserine mark. 2 disordered regions span residues Gly-1431–Ile-1455 and Asp-1467–Thr-1542. Over residues Asp-1467–Thr-1478 the composition is skewed to low complexity. A compositionally biased stretch (polar residues) spans Gly-1488–Leu-1497. Phosphoserine is present on residues Ser-1489, Ser-1507, Ser-1540, Ser-1565, and Ser-1602. A compositionally biased stretch (acidic residues) spans Ser-1525–Ser-1540. An important for interaction with MAP2K3 region spans residues Arg-1585–Asn-1715. The tract at residues Phe-1601–Glu-1638 is disordered. Over residues Lys-1615–Asn-1626 the composition is skewed to polar residues. The segment covering Glu-1628 to Glu-1638 has biased composition (basic and acidic residues). A phosphoserine mark is found at Ser-1642, Ser-1645, and Ser-1647. At Lys-1670 the chain carries N6-methyllysine. Positions Lys-1755 to Thr-1793 are disordered. A coiled-coil region spans residues Ser-1758–Asn-1790. Residues Lys-1761–Thr-1788 show a composition bias toward basic and acidic residues. Residues Gly-1791–Cys-1838 form a Phorbol-ester/DAG-type zinc finger. Ser-1876, Ser-1895, and Ser-1929 each carry phosphoserine. Residues Met-1919–Cys-2813 are interaction with ESR1. The residue at position 1930 (Thr-1930) is a Phosphothreonine. 2 positions are modified to phosphoserine: Ser-1932 and Ser-1945. The region spanning Lys-1994–Lys-2191 is the DH domain. The PH domain maps to Lys-2231–Asn-2333. Ser-2345 and Ser-2398 each carry phosphoserine. A coiled-coil region spans residues Ser-2345–Met-2381. The tract at residues Glu-2466–Leu-2502 is disordered. Thr-2467 is subject to Phosphothreonine. At Ser-2473 the chain carries Phosphoserine. Positions Gln-2491–Leu-2502 are enriched in basic and acidic residues. Ser-2563 and Ser-2566 each carry phosphoserine. Positions Leu-2568–Asp-2683 form a coiled coil. Residues Gln-2665–Leu-2684 are compositionally biased toward basic and acidic residues. A disordered region spans residues Gln-2665–Cys-2813. 3 positions are modified to phosphoserine: Ser-2703, Ser-2709, and Ser-2728. Residues Ser-2720–Ser-2735 show a composition bias toward polar residues. Over residues Gln-2760–Thr-2771 the composition is skewed to low complexity.

As to quaternary structure, interacts with the cAMP-dependent protein kinase (PKA) holoenzyme and with the regulatory subunit PRKAR2A. Interacts with RHOA. Also interacts with RHOB and RHOC. Identified in a ternary complex with RHOA and PRKAR2A. Identified in a complex with NR3C1 and RHOA. Interacts with BRAF and KSR1. Identified in a complex with BRAF and KSR1. Component of a signaling complex containing at least AKAP13, PKN1, MAPK14, ZAK and MAP2K3. Within this complex, AKAP13 interacts directly with PKN1, which in turn recruits MAPK14, MAP2K3 and ZAK. Interacts (phosphorylated form) with YWHAB and YWHAZ. Interaction with YWHAB inhibits activation of RHOA, interferes with PKN1 binding and activation of MAP kinases. Interacts with GNA12. Interacts with IKBKB. Interacts with ESR1, THRA, PPARA and NME2. Interacts (via the C-terminal domain after the PH domain) with MEF2C and RXRB. Interacts (via the C-terminal domain after the PH domain) with PRKD1. In terms of tissue distribution, detected in mammary gland. Detected in heart (at protein level). Expressed as a 5.3 kb transcript in hematopoietic cells, skeletal muscle, lung, heart, estrogen-responsive reproductive tissues, including breast ductal epithelium. Also found in testis and breast cancer cell lines. Predominantly expressed as a 10 kb transcript in the heart and at lower levels in the lung, placenta, kidney, pancreas, skeletal muscle and liver. Transcripts of between 6-9 kb are also expressed in myeloid and lymphoid lineages, a variety of epithelial tissues, and in skeletal muscle.

It localises to the cytoplasm. Its subcellular location is the cytosol. The protein localises to the cell cortex. It is found in the nucleus. The protein resides in the membrane. Functionally, scaffold protein that plays an important role in assembling signaling complexes downstream of several types of G protein-coupled receptors. Activates RHOA in response to signaling via G protein-coupled receptors via its function as Rho guanine nucleotide exchange factor. May also activate other Rho family members. Part of a kinase signaling complex that links ADRA1A and ADRA1B adrenergic receptor signaling to the activation of downstream p38 MAP kinases, such as MAPK11 and MAPK14. Part of a signaling complex that links ADRA1B signaling to the activation of RHOA and IKBKB/IKKB, leading to increased NF-kappa-B transcriptional activity. Part of a RHOA-dependent signaling cascade that mediates responses to lysophosphatidic acid (LPA), a signaling molecule that activates G-protein coupled receptors and potentiates transcriptional activation of the glucocorticoid receptor NR3C1. Part of a signaling cascade that stimulates MEF2C-dependent gene expression in response to lysophosphatidic acid (LPA). Part of a signaling pathway that activates MAPK11 and/or MAPK14 and leads to increased transcription activation of the estrogen receptors ESR1 and ESR2. Part of a signaling cascade that links cAMP and EGFR signaling to BRAF signaling and to PKA-mediated phosphorylation of KSR1, leading to the activation of downstream MAP kinases, such as MAPK1 or MAPK3. Functions as a scaffold protein that anchors cAMP-dependent protein kinase (PKA) and PRKD1. This promotes activation of PRKD1, leading to increased phosphorylation of HDAC5 and ultimately cardiomyocyte hypertrophy. Has no guanine nucleotide exchange activity on CDC42, Ras or Rac. Required for normal embryonic heart development, and in particular for normal sarcomere formation in the developing cardiomyocytes. Plays a role in cardiomyocyte growth and cardiac hypertrophy in response to activation of the beta-adrenergic receptor by phenylephrine or isoproterenol. Required for normal adaptive cardiac hypertrophy in response to pressure overload. Plays a role in osteogenesis. The polypeptide is A-kinase anchor protein 13 (AKAP13) (Homo sapiens (Human)).